A 478-amino-acid polypeptide reads, in one-letter code: Alcohol dehydrogenase (quinone), cytochrome c subunit (478 aa).

The N-terminal stretch at 1–36 (MLNALTRDRLVSEMKQGWKLAAAIGLMAVSFGAAHA) is a signal peptide. The residue at position 37 (Q37) is a Pyrrolidone carboxylic acid. 3 Cytochrome c domains span residues 42–145 (ALIK…MHGV), 189–304 (PEVA…KSMP), and 327–417 (GQGN…RKGW). C56, C59, H60, C204, C207, H208, C340, C343, and H344 together coordinate heme c.

In terms of assembly, the alcohol dehydrogenase multicomponent enzyme system is composed of a dehydrogenase subunit I (AdhA), a cytochrome c subunit II (AdhB) and a subunit III (AdhS). Requires heme c as cofactor.

Its subcellular location is the cell membrane. It catalyses the reaction ethanol + a ubiquinone = a ubiquinol + acetaldehyde. 2,6-dichloro-4-dicyanovinylphenol (PC16) and antimycin A inhibit ubiquinol oxidation activity more selectively than the ubiquinone reductase activity. In terms of biological role, cytochrome c component of the alcohol dehydrogenase multicomponent enzyme system which is involved in the production of acetic acid and in the ethanol oxidase respiratory chain. Quinohemoprotein alcohol dehydrogenase (ADH) catalyzes the oxidation of ethanol to acetaldehyde by transferring electrons to the ubiquinone embedded in the membrane phospholipids. The electrons transfer from ethanol to membranous ubiquinone occurs from pyrroloquinoline quinone (PQQ) to one heme c in subunit I (AdhA), and finally to two heme c in subunit II (AdhB). Besides ubiquinone reduction, ADH also has a ubiquinol (QH2) oxidation reaction which mediates electron transfer from ubiquinol to the non-energy generating bypass oxidase system. The electrons transfer occurs from ubiquinol (QH2) to the additional heme c within subunit II (AdhB). Also able to use quinone analogs such as 2,3-dimethoxy-5-methyl-6-n-decyl-1,4-benzoquinone (DB) and 2,3-dimethoxy-5-methyl-6-n-pentyl-1,4-benzoquinone (PB). The chain is Alcohol dehydrogenase (quinone), cytochrome c subunit from Gluconobacter oxydans (strain 621H) (Gluconobacter suboxydans).